Consider the following 328-residue polypeptide: MKMHVCFSVILMFLSIFFINGALSKLERLKHPVKKKSDGSLSFLVIGDWGRKGGFNQSLVAHQMGVVGEKLDIDFVISVGDNFYDDGLKGVNDPSFEASFSHIYTHPSLQKQWYSVLGNHDYRGNVEAQLSKVLTQKDWRWFCRRSFVLSSGMVDFFFADTNPFVEKYFTEPEDHTYDWRNVLPRNKYISNLLHDLDLEIKKSRATWKFVVGHHGIKTAGNHGVTQELVDQLLPILEENKVDLYINGHDHCLQHIGSHGKTQFLTSGGGSKAWRGHVQPWDPKELKLYYDGQGFMSLHITHSKAKFIYYDVSGNVLHRSSLSKRSAHL.

The first 24 residues, 1 to 24 (MKMHVCFSVILMFLSIFFINGALS), serve as a signal peptide directing secretion. Position 48 (aspartate 48) interacts with Fe cation. A glycan (N-linked (GlcNAc...) asparagine) is linked at asparagine 56. Fe cation-binding residues include aspartate 81 and tyrosine 84. Aspartate 81 serves as a coordination point for Zn(2+). Positions 119 and 213 each coordinate Zn(2+). The active-site Proton donor is histidine 222. Histidine 248 contacts Zn(2+). 248-250 (HDH) contributes to the substrate binding site. A Fe cation-binding site is contributed by histidine 250.

The protein belongs to the metallophosphoesterase superfamily. Purple acid phosphatase family. As to quaternary structure, homodimer. It depends on Fe cation as a cofactor. The cofactor is Zn(2+). Expressed in roots, stems, leaves, flowers and siliques.

The protein localises to the secreted. It catalyses the reaction a phosphate monoester + H2O = an alcohol + phosphate. The sequence is that of Purple acid phosphatase 7 (PAP7) from Arabidopsis thaliana (Mouse-ear cress).